The chain runs to 167 residues: MSKKPAKDKAKSATATKTIALNKRARHEYHLEERYEAGLALQGWEVKAIRAGRANIVDGYAYVRSGEIYLIGAQITPLIQASTHVIPVERRDRKLLLHRAEIDKVLTRVEREGYTLVPTALYWSSNKVKLEIALAKGKQSHDKRDAAKERDWQRDKQRVMRRHNRDA.

The interval 137-167 (GKQSHDKRDAAKERDWQRDKQRVMRRHNRDA) is disordered. A compositionally biased stretch (basic and acidic residues) spans 139–158 (QSHDKRDAAKERDWQRDKQR).

Belongs to the SmpB family.

It localises to the cytoplasm. Required for rescue of stalled ribosomes mediated by trans-translation. Binds to transfer-messenger RNA (tmRNA), required for stable association of tmRNA with ribosomes. tmRNA and SmpB together mimic tRNA shape, replacing the anticodon stem-loop with SmpB. tmRNA is encoded by the ssrA gene; the 2 termini fold to resemble tRNA(Ala) and it encodes a 'tag peptide', a short internal open reading frame. During trans-translation Ala-aminoacylated tmRNA acts like a tRNA, entering the A-site of stalled ribosomes, displacing the stalled mRNA. The ribosome then switches to translate the ORF on the tmRNA; the nascent peptide is terminated with the 'tag peptide' encoded by the tmRNA and targeted for degradation. The ribosome is freed to recommence translation, which seems to be the essential function of trans-translation. The polypeptide is SsrA-binding protein (Xanthomonas campestris pv. campestris (strain 8004)).